The sequence spans 548 residues: MKFVYAAAGASLVGSALATLPVIEAKVLKACCWTIALDANSYGNKFFYSNNGTEFFIRGVAYQQEYQANGTSTENSDYTDPLANVDNCKRDIPYLKQLRTNVIRTYAVDPTKDHDECMKLLDDAGIYLITDLSAPSESINRADPAWNTDLYKRYTSVIDAFAKYSNVIGFFAGNEVANDNNNTNSIAYVKAAVRDMKSYIKSKDYRSSLLVGYATDDDAHIRADLADYLVCGDKESSIDMFGYNIYEWCGDSSFEKSGYKDRTEEFSKYPVPAFFSEYGCIDPKPRKFTDVAALYGPQMNDVWSGGIVYMYFQEANDYGLVSVSGDNVKTKEDFSYLSVQMQKVTATGVNSASYTASNTAVPTCPSVGAKWEASNKLPPSPNSELCDCMVETLSCTVKDSVDEKEYGDLFDYLCAAGVCGGINSNSTSGDYGAYSVCSAKQKLSFVMNQYYKKNNKAATACDFDGKAQTKKGADASGSCASLISQAGTAGTGSVTAGATGSSGSGSASETSKGAAGVAASPMAVKVGNWQFGAYIATALFAGVGMLVL.

A signal peptide spans methionine 1–alanine 25. N-linked (GlcNAc...) asparagine glycosylation is found at asparagine 51 and asparagine 69. A disulfide bond links cysteine 88 and cysteine 117. (1,3-beta-D-glucosyl)n contacts are provided by residues tyrosine 106, serine 133–arginine 141, asparagine 174, and glutamate 175. The active-site Proton donor is glutamate 175. A glycan (N-linked (GlcNAc...) asparagine) is linked at asparagine 181. Residues aspartate 217 and arginine 222 each coordinate (1,3-beta-D-glucosyl)n. 5 disulfide bridges follow: cysteine 231–cysteine 364, cysteine 249–cysteine 280, cysteine 386–cysteine 437, cysteine 395–cysteine 461, and cysteine 414–cysteine 419. Glutamate 277 acts as the Nucleophile in catalysis. Residue tyrosine 309 participates in (1,3-beta-D-glucosyl)n binding. An N-linked (GlcNAc...) asparagine glycan is attached at asparagine 425. Alanine 519 carries the GPI-like-anchor amidated alanine lipid modification. The propeptide at serine 520–leucine 548 is removed in mature form.

Belongs to the glycosyl hydrolase 72 family. In terms of processing, the GPI-like anchor contains a phosphoceramide lipid group.

The protein localises to the cell membrane. Functionally, splits internally a 1,3-beta-glucan molecule and transfers the newly generated reducing end (the donor) to the non-reducing end of another 1,3-beta-glucan molecule (the acceptor) forming a 1,3-beta linkage, resulting in the elongation of 1,3-beta-glucan chains in the cell wall. Involved in cell wall morphogenesis. The polypeptide is 1,3-beta-glucanosyltransferase gel4 (gel4) (Aspergillus fumigatus (strain ATCC MYA-4609 / CBS 101355 / FGSC A1100 / Af293) (Neosartorya fumigata)).